The following is a 312-amino-acid chain: Short chain dehydrogenase pgmD (312 aa).

V46, I47, K171, Y207, K211, and T242 together coordinate NADP(+). The active-site Proton donor is Y207. K211 serves as the catalytic Lowers pKa of active site Tyr.

It belongs to the short-chain dehydrogenases/reductases (SDR) family.

It functions in the pathway pigment biosynthesis. Its pathway is secondary metabolite biosynthesis. Functionally, short chain dehydrogenase; part of the gene cluster that mediates the biosynthesis of pleosporalin A, ascomycone A, as well as a third cryptic naphthoquinone derived pigment, all responsible for the coloration of conidia. Essential for the production of pleosporalin A, but not the 2 other final products. The pathway begins with the biosynthesis of the cyclized heptaketide 3-acetonyl-1,6,8-trihydroxy-2-naphthaldehyde by the NR-PKS pgmA. The C-6 hydroxyl group is further methylated by the O-methyltransferase pgmB to yield fusarubinaldehyde which is in turn oxidized by the cytochrome P450 monooxygenase pgmC at C-9. The C-1 hydroxyl group is then methylated spontaneously. Although pgmE, pgmD and pgmH are essential for the production of pleosporalin A, it is not the case for the 2 other final products and it remains difficult to assign a specific function to each enzyme. PgmF and pgmG seem not to be involved in pigment biosynthesis although they were regulated by the cluster-specific transcription factor pgmR. This chain is Short chain dehydrogenase pgmD, found in Aspergillus terreus.